Consider the following 131-residue polypeptide: Ribonuclease VapC4 (131 aa).

The PINc domain maps to 4–106 (IVPDTNFLIY…IVATNDKELK (103 aa)). Residues D7 and D102 each coordinate Mg(2+).

The protein belongs to the PINc/VapC protein family. It depends on Mg(2+) as a cofactor.

Its function is as follows. Toxic component of a type II toxin-antitoxin (TA) system. An RNase. Its cognate antitoxin is VapB4. This is Ribonuclease VapC4 from Methanocaldococcus jannaschii (strain ATCC 43067 / DSM 2661 / JAL-1 / JCM 10045 / NBRC 100440) (Methanococcus jannaschii).